A 123-amino-acid chain; its full sequence is Ribosome-binding factor A (123 aa).

Belongs to the RbfA family. As to quaternary structure, monomer. Binds 30S ribosomal subunits, but not 50S ribosomal subunits or 70S ribosomes.

It is found in the cytoplasm. Functionally, one of several proteins that assist in the late maturation steps of the functional core of the 30S ribosomal subunit. Associates with free 30S ribosomal subunits (but not with 30S subunits that are part of 70S ribosomes or polysomes). Required for efficient processing of 16S rRNA. May interact with the 5'-terminal helix region of 16S rRNA. This is Ribosome-binding factor A from Chlorobium chlorochromatii (strain CaD3).